A 293-amino-acid polypeptide reads, in one-letter code: GTPase Era (293 aa).

Residues 3–170 enclose the Era-type G domain; sequence KSGFITIIGR…VELMVKYMPE (168 aa). Residues 11-18 form a G1 region; it reads GRPNVGKS. Residue 11–18 participates in GTP binding; sequence GRPNVGKS. The G2 stretch occupies residues 37 to 41; it reads QTTRN. The interval 58–61 is G3; sequence DTPG. GTP is bound by residues 58–62 and 120–123; these read DTPGI and NKID. Residues 120–123 are G4; that stretch reads NKID. The G5 stretch occupies residues 149–151; that stretch reads ISA. The KH type-2 domain maps to 201 to 278; sequence LSKEVPHGIA…YLEVWVKVKK (78 aa).

This sequence belongs to the TRAFAC class TrmE-Era-EngA-EngB-Septin-like GTPase superfamily. Era GTPase family. Monomer.

It is found in the cytoplasm. Its subcellular location is the cell membrane. Its function is as follows. An essential GTPase that binds both GDP and GTP, with rapid nucleotide exchange. Plays a role in 16S rRNA processing and 30S ribosomal subunit biogenesis and possibly also in cell cycle regulation and energy metabolism. The chain is GTPase Era from Clostridium kluyveri (strain NBRC 12016).